A 123-amino-acid chain; its full sequence is uncharacterized protein (123 aa).

This is an uncharacterized protein from Shigella boydii serotype 4 (strain Sb227).